The following is a 139-amino-acid chain: Immunogenic miracidial antigen 8I (139 aa).

Residues I61–H139 form a disordered region. Residues G64 to D85 show a composition bias toward acidic residues. The segment covering S90 to Q103 has biased composition (polar residues).

Belongs to the immunogenic miracidial antigen family.

This is Immunogenic miracidial antigen 8I (8I) from Schistosoma japonicum (Blood fluke).